Consider the following 141-residue polypeptide: Large ribosomal subunit protein uL22 (141 aa).

The disordered stretch occupies residues 108 to 141 (KSEEKKTVAKKTTTTKAPAKKTTSTKKATVKKES). Residues 117–134 (KKTTTTKAPAKKTTSTKK) are compositionally biased toward low complexity.

Belongs to the universal ribosomal protein uL22 family. Part of the 50S ribosomal subunit.

Its function is as follows. This protein binds specifically to 23S rRNA; its binding is stimulated by other ribosomal proteins, e.g. L4, L17, and L20. It is important during the early stages of 50S assembly. It makes multiple contacts with different domains of the 23S rRNA in the assembled 50S subunit and ribosome. The globular domain of the protein is located near the polypeptide exit tunnel on the outside of the subunit, while an extended beta-hairpin is found that lines the wall of the exit tunnel in the center of the 70S ribosome. In Campylobacter jejuni subsp. jejuni serotype O:2 (strain ATCC 700819 / NCTC 11168), this protein is Large ribosomal subunit protein uL22.